Reading from the N-terminus, the 466-residue chain is uncharacterized protein (466 aa).

The protein belongs to the myoviridae tail sheath protein family.

This is an uncharacterized protein from Bacillus subtilis (strain 168).